The following is a 386-amino-acid chain: Succinate--CoA ligase [ADP-forming] subunit beta (386 aa).

An ATP-grasp domain is found at 9-244 (KEILRSYGVS…LDEEDPKEVE (236 aa)). ATP is bound by residues lysine 46, 53–55 (GRG), glutamate 99, cysteine 102, and glutamate 107. Asparagine 199 and aspartate 213 together coordinate Mg(2+). Substrate contacts are provided by residues asparagine 264 and 321 to 323 (GIM).

This sequence belongs to the succinate/malate CoA ligase beta subunit family. In terms of assembly, heterotetramer of two alpha and two beta subunits. Mg(2+) serves as cofactor.

It catalyses the reaction succinate + ATP + CoA = succinyl-CoA + ADP + phosphate. The enzyme catalyses GTP + succinate + CoA = succinyl-CoA + GDP + phosphate. The protein operates within carbohydrate metabolism; tricarboxylic acid cycle; succinate from succinyl-CoA (ligase route): step 1/1. Functionally, succinyl-CoA synthetase functions in the citric acid cycle (TCA), coupling the hydrolysis of succinyl-CoA to the synthesis of either ATP or GTP and thus represents the only step of substrate-level phosphorylation in the TCA. The beta subunit provides nucleotide specificity of the enzyme and binds the substrate succinate, while the binding sites for coenzyme A and phosphate are found in the alpha subunit. The protein is Succinate--CoA ligase [ADP-forming] subunit beta of Geobacillus kaustophilus (strain HTA426).